Reading from the N-terminus, the 784-residue chain is Ribosome biogenesis protein BOP1 homolog (784 aa).

A compositionally biased stretch (basic residues) spans 1–11 (MTKKLALKRRG). The disordered stretch occupies residues 1-159 (MTKKLALKRR…DSDTSDEEDI (159 aa)). 4 stretches are compositionally biased toward acidic residues: residues 27–36 (SENEEEEEDL), 45–54 (EDSTDDEGID), 62–73 (SEELQFESDEEG), and 84–111 (AEED…EDEE). Composition is skewed to basic and acidic residues over residues 112 to 123 (KDSKSKQTDDKP) and 138 to 148 (LPKRDSSKPEY). The span at 149–158 (QDSDTSDEED) shows a compositional bias: acidic residues. 7 WD repeats span residues 445–486 (GHTD…RTIE), 488–526 (DEVV…KVLV), 570–612 (THFK…SQIP), 615–653 (KSKG…LVKK), 656–695 (TNSK…KPYQ), 699–738 (LHRN…DLLQ), and 754–784 (RDEF…RLYT).

It belongs to the WD repeat BOP1/ERB1 family.

It localises to the nucleus. It is found in the nucleolus. The protein localises to the nucleoplasm. Its function is as follows. Required for maturation of ribosomal RNAs and formation of the large ribosomal subunit. In Drosophila melanogaster (Fruit fly), this protein is Ribosome biogenesis protein BOP1 homolog.